The primary structure comprises 540 residues: Chaperonin GroEL (540 aa).

ATP-binding positions include 29-32 (TLGP), 86-90 (DGTTT), glycine 413, 476-478 (NAA), and aspartate 492.

Belongs to the chaperonin (HSP60) family. In terms of assembly, forms a cylinder of 14 subunits composed of two heptameric rings stacked back-to-back. Interacts with the co-chaperonin GroES.

It localises to the cytoplasm. It carries out the reaction ATP + H2O + a folded polypeptide = ADP + phosphate + an unfolded polypeptide.. Its function is as follows. Together with its co-chaperonin GroES, plays an essential role in assisting protein folding. The GroEL-GroES system forms a nano-cage that allows encapsulation of the non-native substrate proteins and provides a physical environment optimized to promote and accelerate protein folding. The polypeptide is Chaperonin GroEL (Geobacillus thermodenitrificans (strain NG80-2)).